A 30-amino-acid chain; its full sequence is Ranatuerin-2OK (30 aa).

Cys23 and Cys30 are oxidised to a cystine.

In terms of tissue distribution, expressed by the skin glands.

Its subcellular location is the secreted. Functionally, antimicrobial peptide. Active against Gram-negative bacterium E.coli (MIC=12.5 uM) and against Gram-positive bacterium S.aureus (MIC=50 uM). The chain is Ranatuerin-2OK from Nidirana okinavana (Kampira Falls frog).